The sequence spans 276 residues: Large ribosomal subunit protein uL2 (276 aa).

Disordered regions lie at residues 14–58 (RNAS…GGGH) and 221–276 (TRGE…KNRK). Residues 16–27 (ASVSDFSELTRS) show a composition bias toward polar residues. Over residues 255-276 (RRPKKASNKMIVRRRPSGKNRK) the composition is skewed to basic residues.

The protein belongs to the universal ribosomal protein uL2 family. Part of the 50S ribosomal subunit. Forms a bridge to the 30S subunit in the 70S ribosome.

Its function is as follows. One of the primary rRNA binding proteins. Required for association of the 30S and 50S subunits to form the 70S ribosome, for tRNA binding and peptide bond formation. It has been suggested to have peptidyltransferase activity; this is somewhat controversial. Makes several contacts with the 16S rRNA in the 70S ribosome. This chain is Large ribosomal subunit protein uL2, found in Bifidobacterium longum subsp. infantis (strain ATCC 15697 / DSM 20088 / JCM 1222 / NCTC 11817 / S12).